The primary structure comprises 461 residues: L-seryl-tRNA(Sec) selenium transferase (461 aa).

Lys-294 bears the N6-(pyridoxal phosphate)lysine mark.

The protein belongs to the SelA family. It depends on pyridoxal 5'-phosphate as a cofactor.

Its subcellular location is the cytoplasm. The enzyme catalyses L-seryl-tRNA(Sec) + selenophosphate + H(+) = L-selenocysteinyl-tRNA(Sec) + phosphate. Its pathway is aminoacyl-tRNA biosynthesis; selenocysteinyl-tRNA(Sec) biosynthesis; selenocysteinyl-tRNA(Sec) from L-seryl-tRNA(Sec) (bacterial route): step 1/1. In terms of biological role, converts seryl-tRNA(Sec) to selenocysteinyl-tRNA(Sec) required for selenoprotein biosynthesis. The protein is L-seryl-tRNA(Sec) selenium transferase of Haemophilus influenzae (strain ATCC 51907 / DSM 11121 / KW20 / Rd).